Reading from the N-terminus, the 173-residue chain is MMTQAASGIDLFIPEVYDIVWSLIILVIVAVFFYKFFMPKFNAIFDERAAKIQGNIAKAEQARKDADEAKAKYEAQLSTARVDAAKIRDDARAEASHIIADARSRAESDAAQITASAQRSIESQHQQAIVSLKGEVGALATALAGKILGAKLEDNDVQSSMIDSMIDDLGAKK.

A helical transmembrane segment spans residues 19–39 (IVWSLIILVIVAVFFYKFFMP).

The protein belongs to the ATPase B chain family. In terms of assembly, F-type ATPases have 2 components, F(1) - the catalytic core - and F(0) - the membrane proton channel. F(1) has five subunits: alpha(3), beta(3), gamma(1), delta(1), epsilon(1). F(0) has three main subunits: a(1), b(2) and c(10-14). The alpha and beta chains form an alternating ring which encloses part of the gamma chain. F(1) is attached to F(0) by a central stalk formed by the gamma and epsilon chains, while a peripheral stalk is formed by the delta and b chains.

The protein localises to the cell membrane. F(1)F(0) ATP synthase produces ATP from ADP in the presence of a proton or sodium gradient. F-type ATPases consist of two structural domains, F(1) containing the extramembraneous catalytic core and F(0) containing the membrane proton channel, linked together by a central stalk and a peripheral stalk. During catalysis, ATP synthesis in the catalytic domain of F(1) is coupled via a rotary mechanism of the central stalk subunits to proton translocation. Its function is as follows. Component of the F(0) channel, it forms part of the peripheral stalk, linking F(1) to F(0). The protein is ATP synthase subunit b of Bifidobacterium longum (strain NCC 2705).